The sequence spans 326 residues: Dipeptide transport ATP-binding protein DppD (326 aa).

The 251-residue stretch at 5–255 (IRVEDLRAVY…PLHPYTRGLI (251 aa)) folds into the ABC transporter domain. Residues 44 to 49 (ASGKST), N61, and Q97 contribute to the ATP site. C285, C291, C298, and C316 together coordinate [4Fe-4S] cluster.

Belongs to the ABC transporter superfamily.

It localises to the cell membrane. The enzyme catalyses a dipeptide(out) + ATP + H2O = a dipeptide(in) + ADP + phosphate + H(+). Its activity is regulated as follows. The C-terminal iron-sulfur cluster may stabilize the structure of the C-terminal loops and may function in the regulation of the transport process. Functionally, part of the ABC transporter Dpp involved in dipeptide transport. Responsible for energy coupling to the transport system. The protein is Dipeptide transport ATP-binding protein DppD of Caldanaerobacter subterraneus subsp. tengcongensis (strain DSM 15242 / JCM 11007 / NBRC 100824 / MB4) (Thermoanaerobacter tengcongensis).